A 462-amino-acid polypeptide reads, in one-letter code: MGKEKTHINIVVIGHVDSGKSTTTGHLIYKCGGIDKRTIEKFEKEAAEMGKGSFKYAWVLDKLKAERERGITIDISLWKFETSKYYVTIIDAPGHRDFIKNMITGTSQADCAVLIVAAGVGEFEAGISKNGQTREHALLAYTLGVKQLIVGINKMDSTEPPYSQKRYEEIVKEVSTYIKKIGYNPDTVAFVPISGWNGDNMLEPSPNMPWFKGWKITRKEGSGSGTTLLEALDCILPPSRPTDKPLRLPLQDVYKIGGIGTVPVGRVETGVIKPGMVVTFAPVNVTTEVKSVEMHHEALTEAVPGDNVGFNVKNVSVKDVRRGNVAGDSKNDPPMEAGSFTAQVIILNHPGQIGAGYAPVLDCHTAHIACKFAELKEKIDRRSGKKLEDNPKFLKSGDAAIVDMIPGKPMCVESFSDYPPLGRFAVRDMRQTVAVGVIKAVEKKAAGSGKVTKSAQKAAKTK.

Gly2 bears the N,N,N-trimethylglycine mark. In terms of domain architecture, tr-type G spans 5–242 (KTHINIVVIG…DCILPPSRPT (238 aa)). The segment at 14–21 (GHVDSGKS) is G1. 14-21 (GHVDSGKS) is a binding site for GTP. The tract at residues 70–74 (GITID) is G2. Residues 91–94 (DAPG) are G3. Residues 91–95 (DAPGH) and 153–156 (NKMD) contribute to the GTP site. The G4 stretch occupies residues 153-156 (NKMD). The interval 194 to 196 (SGW) is G5. A 5-glutamyl glycerylphosphorylethanolamine mark is found at Glu301 and Glu374.

It belongs to the TRAFAC class translation factor GTPase superfamily. Classic translation factor GTPase family. EF-Tu/EF-1A subfamily.

The protein localises to the cytoplasm. Functionally, this protein promotes the GTP-dependent binding of aminoacyl-tRNA to the A-site of ribosomes during protein biosynthesis. The sequence is that of Elongation factor 1-alpha, somatic form (eef1as) from Xenopus laevis (African clawed frog).